Reading from the N-terminus, the 595-residue chain is Glycine betaine transporter BetP (595 aa).

Topologically, residues 1–59 (MTTSDPNPKPIVEDAQPEQITATEELAGLLENPTNLEGKLADAEEEIILEGEDTQASLN) are cytoplasmic. A helical transmembrane segment spans residues 60 to 80 (WSVIVPALVIVLATVVWGIGF). Residues 81-98 (KDSFTNFASSALSAVVDN) are Periplasmic-facing. Residues 99–119 (LGWAFILFGTVFVFFIVVIAA) traverse the membrane as a helical segment. The Cytoplasmic portion of the chain corresponds to 120 to 137 (SKFGTIRLGRIDEAPEFR). A helical membrane pass occupies residues 138–158 (TVSWISMMFAAGMGIGLMFYG). 3 residues coordinate Na(+): Ala-147, Ala-148, and Met-150. 152–153 (IG) contacts glycine betaine. Residues 159–185 (TTEPLTFYRNGVPGHDEHNVGVAMSTT) are Periplasmic-facing. The helical transmembrane segment at 186–206 (MFHWTLHPWAIYAIVGLAIAY) threads the bilayer. Residues 207 to 236 (STFRVGRKQLLSSAFVPLIGEKGAEGWLGK) lie on the Cytoplasmic side of the membrane. The helical transmembrane segment at 237 to 257 (LIDILAIIATVFGTACSLGLG) threads the bilayer. Glycine betaine is bound at residue Ser-253. At 258–276 (ALQIGAGLSAANIIEDPSD) the chain is on the periplasmic side. A helical membrane pass occupies residues 277–296 (WTIVGIVSVLTLAFIFSAIS). The Cytoplasmic portion of the chain corresponds to 297–299 (GVG). Residues 300–323 (KGIQYLSNANMVLAALLAIFVFVV) form a helical membrane-spanning segment. The Na(+) site is built by Ser-306 and Met-310. At 324-365 (GPTVSILNLLPGSIGNYLSNFFQMAGRTAMSADGTAGEWLGS) the chain is on the periplasmic side. Residues 366–386 (WTIFYWAWWISWSPFVGMFLA) traverse the membrane as a helical segment. 373–377 (WWISW) lines the glycine betaine pocket. The Cytoplasmic segment spans residues 387–396 (RISRGRSIRE). The helical transmembrane segment at 397–417 (FILGVLLVPAGVSTVWFSIFG) threads the bilayer. The Periplasmic portion of the chain corresponds to 418–451 (GTAIVFEQNGESIWGDGAAEEQLFGLLHALPGGQ). The helical transmembrane segment at 452–476 (IMGIIAMILLGTFFITSADSASTVM) threads the bilayer. Topologically, residues 477–489 (GTMSQHGQLEANK) are cytoplasmic. Residues 490–510 (WVTAAWGVATAAIGLTLLLSG) form a helical membrane-spanning segment. Residues 511 to 520 (GDNALSNLQN) are Periplasmic-facing. A helical membrane pass occupies residues 521 to 541 (VTIVAATPFLFVVIGLMFALV). The Cytoplasmic segment spans residues 542–595 (KDLSNDVIYLEYREQQRFNARLARERRVHNEHRKRELAAKRRRERKASGAGKRR). Residues 570–595 (HNEHRKRELAAKRRRERKASGAGKRR) form a disordered region. The span at 581–595 (KRRRERKASGAGKRR) shows a compositional bias: basic residues.

This sequence belongs to the BCCT transporter (TC 2.A.15) family. As to quaternary structure, homotrimer. The monomer can accumulate glycine betaine, but trimerization is required to properly respond to osmotic stress.

It localises to the cell inner membrane. Uptake is activated by hyperosmotic stress. Osmoresponsive activation is triggered by a change in the internal K(+) concentration. In addition, shows a pronounced chill stimulation, at temperatures around 10 degrees Celsius. Chill activation may be influenced by the membrane lipid composition. Uptake is completely abolished by the uncoupler CCCP, and to a different extent by the ionophores valinomycin and nigericin. Functionally, involved in response to osmotic stress. High-affinity glycine betaine-specific uptake system, which couples the uptake of glycine betaine to the symport of two Na(+) ions. Transport is driven both by the Na(+) gradient and by the electrical potential. In addition, functions both as an osmosensor and as an osmoregulator that transduces signal to the catalytic part of the carrier protein, which adapts its activity to the extent of osmotic stress. This chain is Glycine betaine transporter BetP, found in Corynebacterium glutamicum (strain ATCC 13032 / DSM 20300 / JCM 1318 / BCRC 11384 / CCUG 27702 / LMG 3730 / NBRC 12168 / NCIMB 10025 / NRRL B-2784 / 534).